A 399-amino-acid chain; its full sequence is uncharacterized protein (399 aa).

Transmembrane regions (helical) follow at residues 26–46 (LLTI…ISLG), 266–286 (VITI…AVGI), 301–321 (IGIL…FVVE), 324–344 (FLGL…AEVI), and 358–378 (AWIS…VGVI).

It belongs to the ABC-4 integral membrane protein family.

It is found in the cell membrane. This is an uncharacterized protein from Methanocaldococcus jannaschii (strain ATCC 43067 / DSM 2661 / JAL-1 / JCM 10045 / NBRC 100440) (Methanococcus jannaschii).